We begin with the raw amino-acid sequence, 69 residues long: Iota-conotoxin LtIIIA (69 aa).

The first 20 residues, 1–20, serve as a signal peptide directing secretion; the sequence is MLKMGVLLFTFLVLFPLTTL. A propeptide spanning residues 21 to 52 is cleaved from the precursor; sequence ELDTDRPVERHAAIKQDLKPQERRGIRLHAPR. Glu-54 and Glu-57 each carry 4-carboxyglutamate. 3 cysteine pairs are disulfide-bonded: Cys-55-Cys-67, Cys-56-Cys-65, and Cys-61-Cys-68. The residue at position 58 (Pro-58) is a 4-hydroxyproline.

In terms of tissue distribution, expressed by the venom duct.

The protein localises to the secreted. Functionally, iota-conotoxins bind to voltage-gated sodium channels and act as agonists by shifting the voltage-dependence of activation to more hyperpolarized levels. This toxin enhances tetrodotoxin-sensitive sodium current in rat dorsal root ganglion neurons. The chain is Iota-conotoxin LtIIIA from Conus litteratus (Lettered cone).